Here is a 194-residue protein sequence, read N- to C-terminus: Mitochondrial import inner membrane translocase subunit Tim22 (194 aa).

2 disulfide bridges follow: Cys69/Cys141 and Cys160/Cys179. 3 consecutive transmembrane segments (helical) span residues 74–94 (ALAC…TAGI), 123–143 (MSYA…ECLI), and 170–190 (AGLK…AAID).

It belongs to the Tim17/Tim22/Tim23 family. In terms of assembly, component of the TIM22 complex, whose core is composed of TIMM22, associated with peripheral protein FXC1/TIMM10B and the 70 kDa heterohexamer. In most cases, the 70 kDa complex is composed of TIMM9 and TIMM10 (TIMM10A or TIMM10B). A small fraction of the 70 kDa complex is composed of TIMM8 (TIMM8A/DDP1 or TIMM8B/DDP2) and TIMM13. The TIM22 complex also contains AGK and TIMM29. Interacts directly with TIMM9, TIMM10A and FXC1/TIMM10B. Interacts (when oxidized) with TIMM29; interaction is direct. Disulfide bonds promote efficient assembly of the TIM22 complex.

The protein localises to the mitochondrion inner membrane. In terms of biological role, essential core component of the TIM22 complex, a complex that mediates the import and insertion of multi-pass transmembrane proteins into the mitochondrial inner membrane. In the TIM22 complex, it constitutes the voltage-activated and signal-gated channel. Forms a twin-pore translocase that uses the membrane potential as external driving force in 2 voltage-dependent steps. This Homo sapiens (Human) protein is Mitochondrial import inner membrane translocase subunit Tim22 (TIMM22).